Consider the following 246-residue polypeptide: MIESSSPTPPALHEGAPADVSHPRNIRSFVRRTGRTTVGQAKAFADVGPRFLLAYSGLPMDFSAVYGRDAPTILEIGFGMGEATAHIAGLMPEKNFLCCEVHTPGVGALLKRIDEQALTNIRILQHDAVEVIDHMLPLGSLDGAHIFFPDPWHKTKHNKRRLIQAPLIAKLAARLKPGGYLHCATDWQPYAEQILEVLSAEPLLKNTADAASDGYAPKPGYRPLTKFENRGIKLGHGVWDVVFTRA.

Positions 1–23 (MIESSSPTPPALHEGAPADVSHP) are disordered. 4 residues coordinate S-adenosyl-L-methionine: glutamate 75, glutamate 100, aspartate 127, and aspartate 150. Aspartate 150 is an active-site residue. Lysine 154 lines the substrate pocket. An interaction with RNA region spans residues 156-161 (KHNKRR). Substrate is bound by residues aspartate 186 and 225 to 228 (TKFE).

The protein belongs to the class I-like SAM-binding methyltransferase superfamily. TrmB family.

The enzyme catalyses guanosine(46) in tRNA + S-adenosyl-L-methionine = N(7)-methylguanosine(46) in tRNA + S-adenosyl-L-homocysteine. Its pathway is tRNA modification; N(7)-methylguanine-tRNA biosynthesis. Functionally, catalyzes the formation of N(7)-methylguanine at position 46 (m7G46) in tRNA. This chain is tRNA (guanine-N(7)-)-methyltransferase, found in Polaromonas naphthalenivorans (strain CJ2).